The sequence spans 552 residues: Alcohol dehydrogenase [acceptor] (552 aa).

3–32 is an FAD binding site; it reads DYIIVGAGSAGCVLANRLSADPSKRVCLLE. H469 acts as the Proton acceptor in catalysis.

It belongs to the GMC oxidoreductase family. FAD is required as a cofactor.

The protein resides in the cell inner membrane. The enzyme catalyses a primary alcohol + A = an aldehyde + AH2. In terms of biological role, converts aliphatic medium-chain-length alcohols into aldehydes. May be linked to the electron transfer chain. The protein is Alcohol dehydrogenase [acceptor] (alkJ) of Pseudomonas putida (Arthrobacter siderocapsulatus).